Consider the following 160-residue polypeptide: Ribosomal RNA large subunit methyltransferase H (160 aa).

S-adenosyl-L-methionine is bound by residues Leu76, Gly108, and Phe127 to Trp132.

This sequence belongs to the RNA methyltransferase RlmH family. As to quaternary structure, homodimer.

The protein resides in the cytoplasm. The catalysed reaction is pseudouridine(1915) in 23S rRNA + S-adenosyl-L-methionine = N(3)-methylpseudouridine(1915) in 23S rRNA + S-adenosyl-L-homocysteine + H(+). Functionally, specifically methylates the pseudouridine at position 1915 (m3Psi1915) in 23S rRNA. The chain is Ribosomal RNA large subunit methyltransferase H from Bartonella tribocorum (strain CIP 105476 / IBS 506).